We begin with the raw amino-acid sequence, 456 residues long: Histidine--tRNA ligase (456 aa).

Residues 1–20 are disordered; it reads MTQSENVAAAGGAKTEPKVR.

This sequence belongs to the class-II aminoacyl-tRNA synthetase family. As to quaternary structure, homodimer.

Its subcellular location is the cytoplasm. The enzyme catalyses tRNA(His) + L-histidine + ATP = L-histidyl-tRNA(His) + AMP + diphosphate + H(+). This is Histidine--tRNA ligase from Cupriavidus necator (strain ATCC 17699 / DSM 428 / KCTC 22496 / NCIMB 10442 / H16 / Stanier 337) (Ralstonia eutropha).